We begin with the raw amino-acid sequence, 121 residues long: Small ribosomal subunit protein bS16 (121 aa).

A disordered region spans residues 80–121 (AGVREKTERNNPNKAKPGKKAQERAEEKAAKAAEAAEAADAE). 2 stretches are compositionally biased toward basic and acidic residues: residues 81–90 (GVREKTERNN) and 99–110 (KAQERAEEKAAK).

The protein belongs to the bacterial ribosomal protein bS16 family.

The sequence is that of Small ribosomal subunit protein bS16 from Ruegeria sp. (strain TM1040) (Silicibacter sp.).